The following is a 325-amino-acid chain: Alkanal monooxygenase beta chain (325 aa).

It belongs to the bacterial luciferase oxidoreductase family. As to quaternary structure, heterodimer of an alpha and a beta chain.

It catalyses the reaction a long-chain fatty aldehyde + FMNH2 + O2 = a long-chain fatty acid + hnu + FMN + H2O + 2 H(+). Functionally, light-emitting reaction in luminous bacteria. The specific role of the beta subunit is unknown, but it is absolutely required for bioluminescence activity. The sequence is that of Alkanal monooxygenase beta chain (luxB) from Photobacterium leiognathi.